Reading from the N-terminus, the 279-residue chain is Inorganic pyrophosphatase 2 (279 aa).

Asp12 acts as the Nucleophile in catalysis. Mg(2+) contacts are provided by Asp12 and Asp14. Catalysis depends on Asp14, which acts as the Proton donor. Asp23 and Asp98 together coordinate substrate. Residue Asp182 coordinates Mg(2+).

Belongs to the HAD-like hydrolase superfamily. As to quaternary structure, tetramer. Mg(2+) is required as a cofactor.

It catalyses the reaction diphosphate + H2O = 2 phosphate + H(+). In terms of biological role, catalyzes the specific cleavage of pyrophosphate. The protein is Inorganic pyrophosphatase 2 of Arabidopsis thaliana (Mouse-ear cress).